We begin with the raw amino-acid sequence, 494 residues long: NAD(P)H-quinone oxidoreductase subunit 2 B, chloroplastic (494 aa).

A run of 13 helical transmembrane segments spans residues 6-26, 39-59, 81-101, 106-126, 131-151, 166-186, 211-231, 277-297, 305-325, 336-356, 377-397, 413-433, and 468-488; these read LLLF…GLIL, TPWF…VLLF, IFRF…VEYI, MAIT…MVLC, LVTI…LSGY, LLMG…LYGL, ILIA…LVPF, WHLL…LIAI, MLAY…IAGD, YMLF…LFGL, AFSL…AGFF, LLVS…LKII, and MIVC…IIAI.

It belongs to the complex I subunit 2 family. In terms of assembly, NDH is composed of at least 16 different subunits, 5 of which are encoded in the nucleus.

Its subcellular location is the plastid. The protein resides in the chloroplast thylakoid membrane. It catalyses the reaction a plastoquinone + NADH + (n+1) H(+)(in) = a plastoquinol + NAD(+) + n H(+)(out). The enzyme catalyses a plastoquinone + NADPH + (n+1) H(+)(in) = a plastoquinol + NADP(+) + n H(+)(out). In terms of biological role, NDH shuttles electrons from NAD(P)H:plastoquinone, via FMN and iron-sulfur (Fe-S) centers, to quinones in the photosynthetic chain and possibly in a chloroplast respiratory chain. The immediate electron acceptor for the enzyme in this species is believed to be plastoquinone. Couples the redox reaction to proton translocation, and thus conserves the redox energy in a proton gradient. In Cycas taitungensis (Prince sago), this protein is NAD(P)H-quinone oxidoreductase subunit 2 B, chloroplastic.